The chain runs to 758 residues: MEKPPFRQNQVCGSWVMKERLGTGGFGHVYLYQNQETSEKIAVKLCRLELNSKNKDRWSRGIQIMKKLKHLNVVTAKDVPEEMMHIALNDLPLLAMEYCSKGDLRKLLSKPENCCGLKESEVLSLLNDVGSGIQYLHENKIIHRDLKPENIVLQEINGKLVHKIIDLGYAKDLDQGSLCTSFVGTLQYLAPELFEGKSYTVTVDFWSFGTMIFECCCGFRPFLHNLQPVQWTSKVRNKGPKDIMAVEDMNGEVRFSTHLPYPNNLSRTLLEPLEGLLQLMLKWDPVQRGLGLNTDSKQPQCFVLLDQILSMKVVHILNMTTTQVHSFLLSPDEGLHSLQQRIENETKIELLNQDLLQETGVMSDPRKPAAQCVLDGVRGWDSYIVYLFDKSLTKYMGPLTARTLPESVNFIVRETKTQLPLSTLKKVWGEAVSYICGLREDYSRLFQGQRAAMLSLLRFNTNLTRYKNMMFSFSQQLKAKLDFFKTSIQYDLEKYSDQMQYGISSEKMLKAWHENEERAAAFAQVAEIGHLDEEIMALHSEIVELQRSPYARRQGDVMEQLQEKAIELYKQLKAKCKMPDPQHGYSDSSEMVKVIVQTVQNQDRVLRDLYAHLSKILLSKQKIIDLFPKIERTLECIKEADTTVMQMQIKRQREFWHLLKIACAQNTTRSSVSQSGEMPSSLSTWNQTQAQCSSRLPMSLQVPHEGDSVNHLLEENQRYLTQLTSLLQETTEEKSESIMAQDWSWTKYESLVAKSPRL.

Positions 15-301 constitute a Protein kinase domain; that stretch reads WVMKERLGTG…LNTDSKQPQC (287 aa). ATP-binding positions include 21–29 and K44; that span reads LGTGGFGHV. D145 serves as the catalytic Proton acceptor. Positions 456–477 are leucine-zipper; it reads LLRFNTNLTRYKNMMFSFSQQL. An NEMO-binding region spans residues 741–746; sequence QDWSWT.

This sequence belongs to the protein kinase superfamily. Ser/Thr protein kinase family. I-kappa-B kinase subfamily. Directly interacts with ikbkg/nemo.

The protein localises to the cytoplasm. Its subcellular location is the nucleus. The enzyme catalyses L-seryl-[I-kappa-B protein] + ATP = O-phospho-L-seryl-[I-kappa-B protein] + ADP + H(+). Its activity is regulated as follows. Activated when phosphorylated and inactivated when dephosphorylated. Phosphorylates inhibitors of NF-kappa-B thus leading to the dissociation of the inhibitor/NF-kappa-B complex and ultimately the degradation of the inhibitor. Phosphorylates 'Ser-10' of histone H3 at NF-kappa-B-regulated promoters during inflammatory responses triggered by cytokines. This chain is Inhibitor of nuclear factor kappa-B kinase subunit alpha (chuk), found in Danio rerio (Zebrafish).